Here is a 300-residue protein sequence, read N- to C-terminus: Phosphoribosylaminoimidazole-succinocarboxamide synthase (300 aa).

It belongs to the SAICAR synthetase family.

It catalyses the reaction 5-amino-1-(5-phospho-D-ribosyl)imidazole-4-carboxylate + L-aspartate + ATP = (2S)-2-[5-amino-1-(5-phospho-beta-D-ribosyl)imidazole-4-carboxamido]succinate + ADP + phosphate + 2 H(+). It functions in the pathway purine metabolism; IMP biosynthesis via de novo pathway; 5-amino-1-(5-phospho-D-ribosyl)imidazole-4-carboxamide from 5-amino-1-(5-phospho-D-ribosyl)imidazole-4-carboxylate: step 1/2. This Methylibium petroleiphilum (strain ATCC BAA-1232 / LMG 22953 / PM1) protein is Phosphoribosylaminoimidazole-succinocarboxamide synthase.